The chain runs to 567 residues: Thiol:disulfide interchange protein DsbD (567 aa).

An N-terminal signal peptide occupies residues 1-19 (MAQRIFTLILLLCSTSAFA). Cystine bridges form between cysteine 122/cysteine 128 and cysteine 185/cysteine 307. 7 helical membrane-spanning segments follow: residues 170–192 (ALWALLIGIGIAFTPCVLPMYPL), 212–234 (LAFIYVQGMALTYTALGLVVAAA), 246–268 (YVLIGLAIVFTLLALSMFGLFTL), 297–319 (GAIAGLICSPCTTAPLSAILLYI), 326–348 (WLGGGTLYLYALGMGLPLMLVTV), 358–380 (GPWMAHVKTAFGFVILALPVFLL), and 387–409 (AWGLRLWSLLGVAFFGWAFITSL). One can recognise a Thioredoxin domain in the interval 435–567 (QDWAFGSPSA…FSAHLHDRQP (133 aa)). Cysteine 482 and cysteine 485 are joined by a disulfide.

Belongs to the thioredoxin family. DsbD subfamily.

The protein resides in the cell inner membrane. It carries out the reaction [protein]-dithiol + NAD(+) = [protein]-disulfide + NADH + H(+). It catalyses the reaction [protein]-dithiol + NADP(+) = [protein]-disulfide + NADPH + H(+). Required to facilitate the formation of correct disulfide bonds in some periplasmic proteins and for the assembly of the periplasmic c-type cytochromes. Acts by transferring electrons from cytoplasmic thioredoxin to the periplasm. This transfer involves a cascade of disulfide bond formation and reduction steps. This chain is Thiol:disulfide interchange protein DsbD, found in Salmonella typhimurium (strain LT2 / SGSC1412 / ATCC 700720).